The sequence spans 202 residues: Translation initiation factor 2 subunit beta (202 aa).

One can recognise a TRAM domain in the interval 145-202 (AIEEGGTYELRIDAVGSKGDGIAKIDKYTVFVPGATKGDVVKVKIKKISGNLAFSERA).

Belongs to the eIF-2-beta/eIF-5 family. As to quaternary structure, heterotrimer composed of an alpha, a beta and a gamma chain.

Functionally, eIF-2 functions in the early steps of protein synthesis by forming a ternary complex with GTP and initiator tRNA. The sequence is that of Translation initiation factor 2 subunit beta (eif2b) from Methanosarcina mazei (strain ATCC BAA-159 / DSM 3647 / Goe1 / Go1 / JCM 11833 / OCM 88) (Methanosarcina frisia).